The chain runs to 461 residues: tRNA modification GTPase MnmE (461 aa).

Residues arginine 22, glutamate 87, and arginine 126 each contribute to the (6S)-5-formyl-5,6,7,8-tetrahydrofolate site. Residues 222 to 382 enclose the TrmE-type G domain; it reads GITAVIAGKP…LENKLYEILI (161 aa). A K(+)-binding site is contributed by asparagine 232. GTP is bound by residues 232–237, 251–257, 276–279, and 363–365; these read NVGKSS, TDIPGTT, DTAG, and SAR. A Mg(2+)-binding site is contributed by serine 236. K(+) is bound by residues threonine 251, isoleucine 253, and threonine 256. Threonine 257 is a Mg(2+) binding site. Residue lysine 461 coordinates (6S)-5-formyl-5,6,7,8-tetrahydrofolate.

Belongs to the TRAFAC class TrmE-Era-EngA-EngB-Septin-like GTPase superfamily. TrmE GTPase family. In terms of assembly, homodimer. Heterotetramer of two MnmE and two MnmG subunits. K(+) serves as cofactor.

It is found in the cytoplasm. In terms of biological role, exhibits a very high intrinsic GTPase hydrolysis rate. Involved in the addition of a carboxymethylaminomethyl (cmnm) group at the wobble position (U34) of certain tRNAs, forming tRNA-cmnm(5)s(2)U34. This is tRNA modification GTPase MnmE from Carboxydothermus hydrogenoformans (strain ATCC BAA-161 / DSM 6008 / Z-2901).